The chain runs to 61 residues: Ferredoxin (61 aa).

In terms of domain architecture, 4Fe-4S ferredoxin-type spans 2 to 28; the sequence is LYITEECTYCGACEPECPTNAISAGSE. Positions 8, 11, 14, 18, 37, 40, 49, and 53 each coordinate [4Fe-4S] cluster.

Requires [4Fe-4S] cluster as cofactor.

Ferredoxins are iron-sulfur proteins that transfer electrons in a wide variety of metabolic reactions. The polypeptide is Ferredoxin (Chlorobaculum thiosulfatiphilum (Chlorobium limicola f.sp. thiosulfatophilum)).